Consider the following 367-residue polypeptide: MKKQRIAVKIGSSSLADSHGGISKEQLSDHVAALARLKEEGHEVLLITSGAVAAGFSALGYPSRPVTIKGKQAAAAVGQSLLMQAYTEEFRKYGIVTAQLLLTRSDFSRKEQYSNAYATLGELLNRSALPIINENDSISLEELTFGDNDMLSALVSGLVSADMLMIFTDVNGLYDQNPQKNADAKKYHFLPEVTEEIASLAGDAGSKLGTGGMKSKIDAAKTALSLGVSVFIGTGCGQEKFLDVMKGKGDGTYIGNAPQKVIKMNKQWIALHSLVSGQIEVDAGAATAIIQHGKSLLPAGVTSVSGFFQVDEVVEVITQQGRVIGKGQCTYSAEELRNLKGMQSQDIQARGERHNYEVIHRDHWVSF.

Lys9 contributes to the ATP binding site. Ser49, Asp136, and Asn148 together coordinate substrate. ATP is bound by residues 168–169 and 210–216; these read TD and TGGMKSK. The region spanning 276–350 is the PUA domain; the sequence is SGQIEVDAGA…GMQSQDIQAR (75 aa).

This sequence belongs to the glutamate 5-kinase family.

Its subcellular location is the cytoplasm. It catalyses the reaction L-glutamate + ATP = L-glutamyl 5-phosphate + ADP. It participates in amino-acid biosynthesis; L-proline biosynthesis; L-glutamate 5-semialdehyde from L-glutamate: step 1/2. Catalyzes the transfer of a phosphate group to glutamate to form L-glutamate 5-phosphate. The sequence is that of Glutamate 5-kinase from Bacillus mycoides (strain KBAB4) (Bacillus weihenstephanensis).